Here is a 278-residue protein sequence, read N- to C-terminus: Digeranylgeranylglyceryl phosphate synthase (278 aa).

8 consecutive transmembrane segments (helical) span residues 15-35 (VIGS…WKIV), 36-56 (PIKL…GYII), 89-109 (IVLF…AFII), 133-153 (LIVA…FFEG), 159-179 (TLIP…VKGI), 203-223 (WFIS…PYFF), 225-245 (FNII…LVVL), and 258-278 (AYMK…TLPI).

Belongs to the UbiA prenyltransferase family. DGGGP synthase subfamily. Mg(2+) is required as a cofactor.

It is found in the cell membrane. The enzyme catalyses sn-3-O-(geranylgeranyl)glycerol 1-phosphate + (2E,6E,10E)-geranylgeranyl diphosphate = 2,3-bis-O-(geranylgeranyl)-sn-glycerol 1-phosphate + diphosphate. It participates in membrane lipid metabolism; glycerophospholipid metabolism. In terms of biological role, prenyltransferase that catalyzes the transfer of the geranylgeranyl moiety of geranylgeranyl diphosphate (GGPP) to the C2 hydroxyl of (S)-3-O-geranylgeranylglyceryl phosphate (GGGP). This reaction is the second ether-bond-formation step in the biosynthesis of archaeal membrane lipids. In Sulfurisphaera tokodaii (strain DSM 16993 / JCM 10545 / NBRC 100140 / 7) (Sulfolobus tokodaii), this protein is Digeranylgeranylglyceryl phosphate synthase.